Here is an 861-residue protein sequence, read N- to C-terminus: ToMV resistant protein Tm-2 netted virescent (861 aa).

Residues 63 to 83 (VKNLLKDIQELAGDVEDLLDD) are a coiled coil. One can recognise an NB-ARC domain in the interval 162–388 (DDFNMLQAKL…LESMGHKVQD (227 aa)). Position 185-192 (185-192 (GMPGLGKT)) interacts with ATP. LRR repeat units lie at residues 225-248 (LDIA…NLRS), 305-327 (LHAL…IFNF), 388-411 (DGCA…CFLY), 449-472 (LAED…TYNG), 510-536 (VARL…KLEK), 585-608 (MTCL…IVKL), 609-631 (TRLE…VWES), 652-680 (ISSF…FFEP), 689-710 (LRKL…IFSP), 712-735 (LKAL…LSSY), 736-758 (PHIA…SFPP), 784-807 (LRKL…EANG), and 810-835 (FPQL…DVSM).

The protein belongs to the disease resistance NB-LRR family. In terms of assembly, (Microbial infection) Interacts with tobamoviruses mouvement protein at the plasma membrane; this interaction triggers defense responses leading to programmed cell death. Binds to HSP90 proteins; this interaction seems required for defense responses toward tobamoviruses.

It is found in the cell membrane. In terms of biological role, inhibitor of viral mouvements which confers resistance to some tobamoviruses including tomato mosaic virus (ToMV) (e.g. isolate L and W3) and tobacco mosaic virus (TMV), but not to resistance-breaking isolates (e.g. Ltbl) ToMV and tomato brown rugose fruit virus (ToBRFV). Elicits a hypersensitive reaction in response to avirulent (Avr) movement proteins from resistance inducing tobamoviruses (e.g. ToMV and TMV) strains, thus leading to programmed cell death. This is ToMV resistant protein Tm-2 netted virescent from Solanum lycopersicum (Tomato).